The following is a 297-amino-acid chain: Probable endonuclease 4 (297 aa).

Zn(2+) is bound by residues H69, H110, E145, D179, H182, H214, D227, H229, and E259.

This sequence belongs to the AP endonuclease 2 family. It depends on Zn(2+) as a cofactor.

It carries out the reaction Endonucleolytic cleavage to 5'-phosphooligonucleotide end-products.. In terms of biological role, endonuclease IV plays a role in DNA repair. It cleaves phosphodiester bonds at apurinic or apyrimidinic (AP) sites, generating a 3'-hydroxyl group and a 5'-terminal sugar phosphate. The polypeptide is Probable endonuclease 4 (Bacillus licheniformis (strain ATCC 14580 / DSM 13 / JCM 2505 / CCUG 7422 / NBRC 12200 / NCIMB 9375 / NCTC 10341 / NRRL NRS-1264 / Gibson 46)).